Reading from the N-terminus, the 72-residue chain is Probable neurotoxin pcD-996 (72 aa).

The signal sequence occupies residues 1-19 (MNYLVMISFALLLVIGVES). The 52-residue stretch at 21-72 (RDGYFVEPDNCLVYCMPSPEICDRGCKRYGATSGFCKEFSKGENFCWCKGLR) folds into the LCN-type CS-alpha/beta domain. Cystine bridges form between cysteine 35–cysteine 56, cysteine 42–cysteine 66, and cysteine 46–cysteine 68. Residue arginine 72 is a propeptide, removed by a carboxypeptidase.

It belongs to the long (3 C-C) scorpion toxin superfamily. As to expression, expressed by the venom gland.

The protein resides in the secreted. The chain is Probable neurotoxin pcD-996 from Androctonus australis (Sahara scorpion).